We begin with the raw amino-acid sequence, 524 residues long: Glutamyl-tRNA(Gln) amidotransferase subunit A, mitochondrial (524 aa).

Active-site charge relay system residues include K76 and S171. S195 acts as the Acyl-ester intermediate in catalysis.

The protein belongs to the amidase family. GatA subfamily. Subunit of the heterotrimeric GatCAB amidotransferase (AdT) complex, composed of A (qrsl1), B (gatb) and C (gatc) subunits.

The protein localises to the mitochondrion. It catalyses the reaction L-glutamyl-tRNA(Gln) + L-glutamine + ATP + H2O = L-glutaminyl-tRNA(Gln) + L-glutamate + ADP + phosphate + H(+). Functionally, allows the formation of correctly charged Gln-tRNA(Gln) through the transamidation of misacylated Glu-tRNA(Gln) in the mitochondria. The reaction takes place in the presence of glutamine and ATP through an activated gamma-phospho-Glu-tRNA(Gln). In Xenopus tropicalis (Western clawed frog), this protein is Glutamyl-tRNA(Gln) amidotransferase subunit A, mitochondrial (qrsl1).